Here is a 319-residue protein sequence, read N- to C-terminus: Cell division protein FtsQ (319 aa).

The disordered stretch occupies residues 1–53 (MDSREDMVPDVLLEAPNPRRRQSADTSTERPTRPARREQGYARVTPRGERMGN). Over 1–70 (MDSREDMVPD…PDFFAWFDPR (70 aa)) the chain is Cytoplasmic. Basic and acidic residues predominate over residues 27 to 52 (STERPTRPARREQGYARVTPRGERMG). Residues 71–87 (WLWVPLMVCLAVGGYWA) traverse the membrane as a helical segment. Residues 88 to 319 (YEPLEKLLER…NATRNAPTHP (232 aa)) are Periplasmic-facing. Positions 97-166 (RPFKSVVVEG…DTLVVKIAEQ (70 aa)) constitute a POTRA domain.

This sequence belongs to the FtsQ/DivIB family. FtsQ subfamily. Part of a complex composed of FtsB, FtsL and FtsQ.

The protein resides in the cell inner membrane. Essential cell division protein. May link together the upstream cell division proteins, which are predominantly cytoplasmic, with the downstream cell division proteins, which are predominantly periplasmic. May control correct divisome assembly. This Cellvibrio japonicus (strain Ueda107) (Pseudomonas fluorescens subsp. cellulosa) protein is Cell division protein FtsQ.